A 155-amino-acid polypeptide reads, in one-letter code: MSRRSTNEGRLTRPNPVYRNRLVNMLVNIILKNGKKSVAYRILHEAMKTIQQKTKKNPLAVVRQAIRRVTPNVAVKARRRGGSTYQVPVEIKPDQGKALAVRWILAAARKRPGRSMAFKLSYELMDAARQTGNAIRKREETHRMAEANKAFAHYR.

It belongs to the universal ribosomal protein uS7 family. As to quaternary structure, part of the 30S ribosomal subunit.

It is found in the plastid. The protein resides in the chloroplast. One of the primary rRNA binding proteins, it binds directly to 16S rRNA where it nucleates assembly of the head domain of the 30S subunit. The sequence is that of Small ribosomal subunit protein uS7c (rps7) from Staurastrum punctulatum (Green alga).